Consider the following 387-residue polypeptide: Putative serine/threonine-protein kinase (387 aa).

A Protein kinase domain is found at 15–344; sequence YQIEKLLNRG…ERVLEGQVEI (330 aa). ATP contacts are provided by residues 21–29 and Lys-55; that span reads LNRGGMDSY. Asp-164 (proton acceptor) is an active-site residue. Helical transmembrane passes span 232-252 and 363-383; these read PPNA…MLVG and SIFT…LLIF.

This sequence belongs to the protein kinase superfamily. Ser/Thr protein kinase family.

The protein resides in the cell membrane. The catalysed reaction is L-seryl-[protein] + ATP = O-phospho-L-seryl-[protein] + ADP + H(+). It carries out the reaction L-threonyl-[protein] + ATP = O-phospho-L-threonyl-[protein] + ADP + H(+). This Mycoplasma genitalium (strain ATCC 33530 / DSM 19775 / NCTC 10195 / G37) (Mycoplasmoides genitalium) protein is Putative serine/threonine-protein kinase.